Reading from the N-terminus, the 156-residue chain is Small ribosomal subunit protein uS7 (156 aa).

The protein belongs to the universal ribosomal protein uS7 family. In terms of assembly, part of the 30S ribosomal subunit. Contacts proteins S9 and S11.

Functionally, one of the primary rRNA binding proteins, it binds directly to 16S rRNA where it nucleates assembly of the head domain of the 30S subunit. Is located at the subunit interface close to the decoding center, probably blocks exit of the E-site tRNA. In Thermosynechococcus vestitus (strain NIES-2133 / IAM M-273 / BP-1), this protein is Small ribosomal subunit protein uS7.